The chain runs to 243 residues: 1-(5-phosphoribosyl)-5-[(5-phosphoribosylamino)methylideneamino] imidazole-4-carboxamide isomerase (243 aa).

Residue aspartate 10 is the Proton acceptor of the active site. Aspartate 129 serves as the catalytic Proton donor.

Belongs to the HisA/HisF family.

The protein localises to the cytoplasm. The enzyme catalyses 1-(5-phospho-beta-D-ribosyl)-5-[(5-phospho-beta-D-ribosylamino)methylideneamino]imidazole-4-carboxamide = 5-[(5-phospho-1-deoxy-D-ribulos-1-ylimino)methylamino]-1-(5-phospho-beta-D-ribosyl)imidazole-4-carboxamide. The protein operates within amino-acid biosynthesis; L-histidine biosynthesis; L-histidine from 5-phospho-alpha-D-ribose 1-diphosphate: step 4/9. This is 1-(5-phosphoribosyl)-5-[(5-phosphoribosylamino)methylideneamino] imidazole-4-carboxamide isomerase from Saccharopolyspora erythraea (strain ATCC 11635 / DSM 40517 / JCM 4748 / NBRC 13426 / NCIMB 8594 / NRRL 2338).